A 306-amino-acid chain; its full sequence is UDP-N-acetylenolpyruvoylglucosamine reductase (306 aa).

In terms of domain architecture, FAD-binding PCMH-type spans 34–199 (KSGGAAEWLF…VAATFRGHAE (166 aa)). R179 is a catalytic residue. The disordered stretch occupies residues 215 to 234 (REASQPLRSRTGGSTFKNPQ). Positions 220-232 (PLRSRTGGSTFKN) are enriched in polar residues. Catalysis depends on S228, which acts as the Proton donor. The active site involves E298.

The protein belongs to the MurB family. The cofactor is FAD.

Its subcellular location is the cytoplasm. The catalysed reaction is UDP-N-acetyl-alpha-D-muramate + NADP(+) = UDP-N-acetyl-3-O-(1-carboxyvinyl)-alpha-D-glucosamine + NADPH + H(+). It participates in cell wall biogenesis; peptidoglycan biosynthesis. Its function is as follows. Cell wall formation. This is UDP-N-acetylenolpyruvoylglucosamine reductase from Rhizorhabdus wittichii (strain DSM 6014 / CCUG 31198 / JCM 15750 / NBRC 105917 / EY 4224 / RW1) (Sphingomonas wittichii).